A 177-amino-acid chain; its full sequence is Probetacellulin (177 aa).

Residues 1–31 (MDPTAPGSSVSSLPLLLVLALGLAILHCVVA) form the signal peptide. Residues 32–118 (DGNTTRTPET…LFYLQQDRGQ (87 aa)) are Extracellular-facing. N-linked (GlcNAc...) asparagine glycans are attached at residues Asn-34, Asn-42, and Asn-52. The EGF-like domain occupies 65-105 (HFSRCPKQYKHYCIHGRCRFVVDEQTPSCICEKGYFGARCE). Intrachain disulfides connect Cys-69-Cys-82, Cys-77-Cys-93, and Cys-95-Cys-104. Residues 112 to 177 (LQQDRGQILV…SEDIQETNIA (66 aa)) constitute a propeptide, removed in mature form. The helical transmembrane segment at 119–139 (ILVVCLIVVMVVFIILVIGVC) threads the bilayer. At 140–177 (TCCHPLRKHRKKKKEEKMETLDKDKTPISEDIQETNIA) the chain is on the cytoplasmic side. Residues 153–177 (KEEKMETLDKDKTPISEDIQETNIA) form a disordered region. Positions 154-167 (EEKMETLDKDKTPI) are enriched in basic and acidic residues.

Monomer. Interacts with EGFR and ERBB4. As to expression, found in several mouse tissues including kidney, uterus and liver, as well as in beta tumor cell line and MCF-7 cells. It is not detected in the brain.

The protein resides in the secreted. Its subcellular location is the extracellular space. It localises to the cell membrane. In terms of biological role, growth factor that binds to EGFR, ERBB4 and other EGF receptor family members. Potent mitogen for retinal pigment epithelial cells and vascular smooth muscle cells. This chain is Probetacellulin (Btc), found in Mus musculus (Mouse).